The chain runs to 66 residues: Opicalcin-1 (66 aa).

Positions 1 to 22 are cleaved as a signal peptide; the sequence is MKPSLIIVTFIVVFMAISCVAA. The propeptide occupies 23–31; that stretch reads DDEQETWIE. Cystine bridges form between C36-C50, C43-C54, and C49-C65. The segment at 55–57 is essential for stimulation of [3H]ryanodine binding to RYR1; that stretch reads KRR.

The protein belongs to the scorpion calcin family. In terms of tissue distribution, expressed by the venom gland.

The protein localises to the secreted. Functionally, this toxin stabilizes ryanodine receptor 1 (RyR1) opening in a long-lasting subconductance state (35% of the full conductance state). Furthermore, it triggers calcium release from sarcoplasmic vesicles (2 nM are enough to induce a sharp release, and 67% of the total calcium is released after toxin (100 nM) addition) probably by acting as a cell-penetrating peptide (CPP). In addition, it has been shown to dose-dependently stimulate ryanodine binding to RyR1 (EC(50)=0.3 nM). It also augments the bell-shaped calcium-[3H]ryanodine binding curve that is maximal at about 10 uM calcium concentration. It binds a different site as ryanodine. It acts synergistically with caffeine. In vivo, intracerebroventricular injection into mice induces neurotoxic symptoms, followed by death. The protein is Opicalcin-1 of Opistophthalmus carinatus (African yellow leg scorpion).